A 257-amino-acid polypeptide reads, in one-letter code: MKAVILAGGLGTRLSEETIVKPKPMVEIGGKPILWHIMKMYSVHGIKDFIICCGYKGYVIKEYFANYFLHMSDVTFHMAENRMEVHHKRVEPWNVTLVDTGDSSMTGGRLKRVAEYVKDDEAFLFTYGDGVADLDIKATIDFHKAHGKKATLTATFPPGRFGALDIRAGQVRSFQEKPKGDGAMINGGFFVLNPSVIDLIDNDATTWEQEPLMTLAQQGELMAFEHPGFWQPMDTLRDKVYLEGLWEKGKAPWKTWE.

Residues 6–10 (LAGGL), 11–13 (GTR), K23, S104, R109, and G128 each bind substrate. Residues D129 and D234 each coordinate Mg(2+).

It belongs to the glucose-1-phosphate cytidylyltransferase family. Homohexamer. It depends on Mg(2+) as a cofactor.

The enzyme catalyses alpha-D-glucose 1-phosphate + CTP + H(+) = CDP-D-glucose + diphosphate. It participates in nucleotide-sugar biosynthesis; CDP-3,6-dideoxy-D-mannose biosynthesis; CDP-3,6-dideoxy-D-mannose from CTP and alpha-D-glucose 1-phosphate: step 1/5. Its pathway is bacterial outer membrane biogenesis; LPS O-antigen biosynthesis. Involved in the biosynthesis of the tyvelose, a 3,6-dideoxyhexose found in the O-antigen of the surface lipopolysaccharides. It catalyzes the transfer of a CMP moiety from CTP to glucose 1-phosphate. The chain is Glucose-1-phosphate cytidylyltransferase (rfbF) from Salmonella typhimurium (strain LT2 / SGSC1412 / ATCC 700720).